Here is a 526-residue protein sequence, read N- to C-terminus: Fatty-acid amide hydrolase 2-B (526 aa).

A helical membrane pass occupies residues 12 to 32; sequence CLLVLVSGLFLALFRLLSPGT. Active-site charge relay system residues include lysine 128 and serine 203. Serine 227 (acyl-ester intermediate) is an active-site residue.

Belongs to the amidase family.

Its subcellular location is the membrane. It catalyses the reaction N-(5Z,8Z,11Z,14Z-eicosatetraenoyl)-ethanolamine + H2O = ethanolamine + (5Z,8Z,11Z,14Z)-eicosatetraenoate. The enzyme catalyses (9Z)-octadecenamide + H2O = (9Z)-octadecenoate + NH4(+). This Danio rerio (Zebrafish) protein is Fatty-acid amide hydrolase 2-B (faah2b).